We begin with the raw amino-acid sequence, 151 residues long: Transcriptional repressor NrdR (151 aa).

Residues 1-24 form a disordered region; it reads MRCPKCQHNGTRVLDSRPSDESRS. A zinc finger spans residues 3–34; that stretch reads CPKCQHNGTRVLDSRPSDESRSIKRRRECEKC. Basic and acidic residues predominate over residues 14–24; the sequence is LDSRPSDESRS. In terms of domain architecture, ATP-cone spans 49–139; sequence LLIIKKDGMR…VYRQFKDINV (91 aa).

This sequence belongs to the NrdR family. Zn(2+) serves as cofactor.

In terms of biological role, negatively regulates transcription of bacterial ribonucleotide reductase nrd genes and operons by binding to NrdR-boxes. The sequence is that of Transcriptional repressor NrdR from Shouchella clausii (strain KSM-K16) (Alkalihalobacillus clausii).